We begin with the raw amino-acid sequence, 113 residues long: Cell cycle protein GpsB (113 aa).

The stretch at 36–68 (LDMVIKDYSTFTQEIEALQAENIRLVQELDNAP) forms a coiled coil.

It belongs to the GpsB family. In terms of assembly, forms polymers through the coiled coil domains. Interacts with PBP1, MreC and EzrA.

The protein localises to the cytoplasm. Its function is as follows. Divisome component that associates with the complex late in its assembly, after the Z-ring is formed, and is dependent on DivIC and PBP2B for its recruitment to the divisome. Together with EzrA, is a key component of the system that regulates PBP1 localization during cell cycle progression. Its main role could be the removal of PBP1 from the cell pole after pole maturation is completed. Also contributes to the recruitment of PBP1 to the division complex. Not essential for septum formation. The sequence is that of Cell cycle protein GpsB from Listeria welshimeri serovar 6b (strain ATCC 35897 / DSM 20650 / CCUG 15529 / CIP 8149 / NCTC 11857 / SLCC 5334 / V8).